Here is a 158-residue protein sequence, read N- to C-terminus: Leptin-B (158 aa).

The signal sequence occupies residues M1–T19. C114 and C158 form a disulfide bridge.

It belongs to the leptin family. Highly expressed in the brain and eye. Expressed at low levels in muscle and skin.

It is found in the secreted. Functionally, may function as part of a signaling pathway that acts to regulate the size of the body fat depot. The chain is Leptin-B from Oryzias latipes (Japanese rice fish).